The sequence spans 278 residues: Non-heme chloroperoxidase (278 aa).

In terms of domain architecture, AB hydrolase-1 spans 24–259 (PIVFHHGWPL…LKTYPGYSHG (236 aa)). Catalysis depends on residues serine 97, aspartate 229, and histidine 258.

It belongs to the AB hydrolase superfamily. Bacterial non-heme haloperoxidase / perhydrolase family. As to quaternary structure, homodimer.

In terms of biological role, chlorinates and brominates suitable organic compounds. Involved in the biosynthesis of the antibiotic pyrrolnitrin. The polypeptide is Non-heme chloroperoxidase (cpo) (Burkholderia pyrrocinia (Pseudomonas pyrrocinia)).